The primary structure comprises 901 residues: HTH-type transcriptional regulator MalT (901 aa).

39–46 provides a ligand contact to ATP; it reads SPAGYGKT. Residues 829–894 form the HTH luxR-type domain; it reads ELIRTSPLTQ…AAVQHAQKLL (66 aa). The H-T-H motif DNA-binding region spans 853–872; the sequence is NEQIAGELEVAATTIKTHIR.

It belongs to the MalT family. Monomer in solution. Oligomerizes to an active state in the presence of the positive effectors ATP and maltotriose.

Its activity is regulated as follows. Activated by ATP and maltotriose, which are both required for DNA binding. Positively regulates the transcription of the maltose regulon whose gene products are responsible for uptake and catabolism of malto-oligosaccharides. Specifically binds to the promoter region of its target genes, recognizing a short DNA motif called the MalT box. The chain is HTH-type transcriptional regulator MalT from Escherichia coli O127:H6 (strain E2348/69 / EPEC).